The following is a 303-amino-acid chain: MNTAHSPDGSGRTGTARVKRGMAEMLKGGVIMDVVTPEQAKIAEGAGAVAVMALERVPADIRAQGGVSRMSDPDMIEGIISAVTIPVMAKARIGHFVEAQILQSLGVDYIDESEVLTPADYTHHIDKWKFTVPFVCGATNLGEALRRINEGAAMIRSKGEAGTGDVSNATTHMRAIGGEIRRLMSLSEDELYVAAKELQAPYELVVEVARAGKLPVTLFTAGGIATPADAAMMMQLGAEGVFVGSGIFKSGDPAQRAAAIVKATTFYDDPDVLAKVSRGLGEAMVGINVEQIAQPERLAERGW.

D33 provides a ligand contact to D-ribose 5-phosphate. K90 (schiff-base intermediate with D-ribose 5-phosphate) is an active-site residue. Residue G162 coordinates D-ribose 5-phosphate. R174 contacts D-glyceraldehyde 3-phosphate. D-ribose 5-phosphate is bound by residues G223 and 244-245; that span reads GS.

This sequence belongs to the PdxS/SNZ family. In the presence of PdxT, forms a dodecamer of heterodimers.

It catalyses the reaction aldehydo-D-ribose 5-phosphate + D-glyceraldehyde 3-phosphate + L-glutamine = pyridoxal 5'-phosphate + L-glutamate + phosphate + 3 H2O + H(+). The protein operates within cofactor biosynthesis; pyridoxal 5'-phosphate biosynthesis. In terms of biological role, catalyzes the formation of pyridoxal 5'-phosphate from ribose 5-phosphate (RBP), glyceraldehyde 3-phosphate (G3P) and ammonia. The ammonia is provided by the PdxT subunit. Can also use ribulose 5-phosphate and dihydroxyacetone phosphate as substrates, resulting from enzyme-catalyzed isomerization of RBP and G3P, respectively. The sequence is that of Pyridoxal 5'-phosphate synthase subunit PdxS from Mycobacterium avium (strain 104).